We begin with the raw amino-acid sequence, 273 residues long: Putative phosphoenolpyruvate synthase regulatory protein (273 aa).

Residue 153–160 (GVSRSGKT) participates in ADP binding.

Belongs to the pyruvate, phosphate/water dikinase regulatory protein family. PSRP subfamily.

It catalyses the reaction [pyruvate, water dikinase] + ADP = [pyruvate, water dikinase]-phosphate + AMP + H(+). The catalysed reaction is [pyruvate, water dikinase]-phosphate + phosphate + H(+) = [pyruvate, water dikinase] + diphosphate. Bifunctional serine/threonine kinase and phosphorylase involved in the regulation of the phosphoenolpyruvate synthase (PEPS) by catalyzing its phosphorylation/dephosphorylation. This Polaromonas naphthalenivorans (strain CJ2) protein is Putative phosphoenolpyruvate synthase regulatory protein.